A 355-amino-acid polypeptide reads, in one-letter code: Uroporphyrinogen decarboxylase (355 aa).

Substrate contacts are provided by residues 27–31, Asp77, Tyr154, Thr209, and His327; that span reads RQAGR.

It belongs to the uroporphyrinogen decarboxylase family. In terms of assembly, homodimer.

The protein resides in the cytoplasm. The catalysed reaction is uroporphyrinogen III + 4 H(+) = coproporphyrinogen III + 4 CO2. Its pathway is porphyrin-containing compound metabolism; protoporphyrin-IX biosynthesis; coproporphyrinogen-III from 5-aminolevulinate: step 4/4. Catalyzes the decarboxylation of four acetate groups of uroporphyrinogen-III to yield coproporphyrinogen-III. This chain is Uroporphyrinogen decarboxylase, found in Tolumonas auensis (strain DSM 9187 / NBRC 110442 / TA 4).